The following is a 117-amino-acid chain: Small ribosomal subunit protein bS6 (117 aa).

A disordered region spans residues 96–117 (KEAAAPAPKAAPVESAPAVEAE). Positions 99–117 (AAPAPKAAPVESAPAVEAE) are enriched in low complexity.

This sequence belongs to the bacterial ribosomal protein bS6 family.

Its function is as follows. Binds together with bS18 to 16S ribosomal RNA. The chain is Small ribosomal subunit protein bS6 from Geobacter sulfurreducens (strain ATCC 51573 / DSM 12127 / PCA).